The chain runs to 246 residues: Phosphomannomutase (246 aa).

Aspartate 13 (nucleophile) is an active-site residue. Aspartate 13 and aspartate 15 together coordinate Mg(2+). Aspartate 15 (proton donor/acceptor) is an active-site residue. Residues arginine 22, arginine 124, arginine 135, arginine 142, serine 180, and aspartate 182 each contribute to the alpha-D-mannose 1-phosphate site. Mg(2+)-binding residues include aspartate 208, tyrosine 220, and threonine 225.

The protein belongs to the eukaryotic PMM family. Homodimer. Requires Mg(2+) as cofactor. As to expression, expressed in roots, stems, leaves, flowers and immature fruits.

Its subcellular location is the cytoplasm. The enzyme catalyses alpha-D-mannose 1-phosphate = D-mannose 6-phosphate. Its pathway is nucleotide-sugar biosynthesis; GDP-alpha-D-mannose biosynthesis; alpha-D-mannose 1-phosphate from D-fructose 6-phosphate: step 2/2. In terms of biological role, catalyzes the interconversion of mannose-6-phosphate to mannose-1-phosphate, the precursor for the synthesis of GDP-mannose. GDP-mannose is an essential sugar nucleotide for the synthesis of D-mannose-containing cell wall polysaccharides (galactomannans and glucomannans), glycolipids, glycoproteins and the antioxidant L-ascorbate. Can complement the yeast temperature-sensitive mutant sec53-6. The chain is Phosphomannomutase from Arabidopsis thaliana (Mouse-ear cress).